Here is a 524-residue protein sequence, read N- to C-terminus: Probable glutamyl-tRNA reductase 3, chloroplastic (524 aa).

The transit peptide at 1-52 (MAVSNASVVLSPNLETSSSWYHHNPSSSLDLIRIHTLPMNKMTRRGLIQRVR) directs the protein to the chloroplast. Substrate contacts are provided by residues 129-132 (TCNR), S189, 194-196 (ENQ), and Q200. The active-site Nucleophile is C130. Position 269–274 (269–274 (GAGEMG)) interacts with NADP(+).

It belongs to the glutamyl-tRNA reductase family.

The protein resides in the plastid. The protein localises to the chloroplast. It carries out the reaction (S)-4-amino-5-oxopentanoate + tRNA(Glu) + NADP(+) = L-glutamyl-tRNA(Glu) + NADPH + H(+). The protein operates within porphyrin-containing compound metabolism; protoporphyrin-IX biosynthesis; 5-aminolevulinate from L-glutamyl-tRNA(Glu): step 1/2. It participates in porphyrin-containing compound metabolism; chlorophyll biosynthesis. Catalyzes the NADPH-dependent reduction of glutamyl-tRNA(Glu) to glutamate 1-semialdehyde (GSA). This chain is Probable glutamyl-tRNA reductase 3, chloroplastic (HEMA3), found in Arabidopsis thaliana (Mouse-ear cress).